Consider the following 195-residue polypeptide: Imidazoleglycerol-phosphate dehydratase (195 aa).

It belongs to the imidazoleglycerol-phosphate dehydratase family.

The protein resides in the cytoplasm. The enzyme catalyses D-erythro-1-(imidazol-4-yl)glycerol 3-phosphate = 3-(imidazol-4-yl)-2-oxopropyl phosphate + H2O. It functions in the pathway amino-acid biosynthesis; L-histidine biosynthesis; L-histidine from 5-phospho-alpha-D-ribose 1-diphosphate: step 6/9. This is Imidazoleglycerol-phosphate dehydratase from Citrifermentans bemidjiense (strain ATCC BAA-1014 / DSM 16622 / JCM 12645 / Bem) (Geobacter bemidjiensis).